The chain runs to 45 residues: Large ribosomal subunit protein bL36 (45 aa).

It belongs to the bacterial ribosomal protein bL36 family.

This is Large ribosomal subunit protein bL36 from Aliivibrio salmonicida (strain LFI1238) (Vibrio salmonicida (strain LFI1238)).